Here is a 353-residue protein sequence, read N- to C-terminus: tRNA U34 carboxymethyltransferase (353 aa).

Carboxy-S-adenosyl-L-methionine is bound by residues lysine 101, tryptophan 119, lysine 124, glycine 144, 166–168, 207–208, methionine 227, tyrosine 231, and arginine 346; these read DPS and LE.

It belongs to the class I-like SAM-binding methyltransferase superfamily. CmoB family. In terms of assembly, homotetramer.

The enzyme catalyses carboxy-S-adenosyl-L-methionine + 5-hydroxyuridine(34) in tRNA = 5-carboxymethoxyuridine(34) in tRNA + S-adenosyl-L-homocysteine + H(+). Functionally, catalyzes carboxymethyl transfer from carboxy-S-adenosyl-L-methionine (Cx-SAM) to 5-hydroxyuridine (ho5U) to form 5-carboxymethoxyuridine (cmo5U) at position 34 in tRNAs. The chain is tRNA U34 carboxymethyltransferase from Psychrobacter sp. (strain PRwf-1).